The sequence spans 294 residues: 1D-myo-inositol 2-acetamido-2-deoxy-alpha-D-glucopyranoside deacetylase (294 aa).

Positions 15, 18, and 150 each coordinate Zn(2+).

It belongs to the MshB deacetylase family. The cofactor is Zn(2+).

It carries out the reaction 1D-myo-inositol 2-acetamido-2-deoxy-alpha-D-glucopyranoside + H2O = 1D-myo-inositol 2-amino-2-deoxy-alpha-D-glucopyranoside + acetate. In terms of biological role, catalyzes the deacetylation of 1D-myo-inositol 2-acetamido-2-deoxy-alpha-D-glucopyranoside (GlcNAc-Ins) in the mycothiol biosynthesis pathway. The chain is 1D-myo-inositol 2-acetamido-2-deoxy-alpha-D-glucopyranoside deacetylase from Streptomyces avermitilis (strain ATCC 31267 / DSM 46492 / JCM 5070 / NBRC 14893 / NCIMB 12804 / NRRL 8165 / MA-4680).